A 242-amino-acid polypeptide reads, in one-letter code: Phosphatidylcholine synthase (242 aa).

Residues 1-15 are Cytoplasmic-facing; it reads MKIFNYKRVPYAEMR. Residues 16–36 form a helical membrane-spanning segment; it reads AFSVHILTASGSFLAFLGVVA. Topologically, residues 37–41 are periplasmic; the sequence is AAEHR. A helical transmembrane segment spans residues 42–62; the sequence is FIDMFWWLGLALLVDGIDGPI. Residues 63–76 lie on the Cytoplasmic side of the membrane; sequence ARKVRVKEVLPNWS. Residues 77–97 form a helical membrane-spanning segment; sequence GDTLDNIIDYVTYVLLPAFAL. At 98-100 the chain is on the periplasmic side; it reads YQS. A helical transmembrane segment spans residues 101 to 121; the sequence is GMIGEPWSFVAAGMIVVSSAI. The Cytoplasmic portion of the chain corresponds to 122 to 133; that stretch reads YYADMGMKTDEY. A helical transmembrane segment spans residues 134–154; the sequence is FFSGFPVVWNMIVFTLFVIDA. Residues 155–159 lie on the Periplasmic side of the membrane; the sequence is SATTA. Residues 160–180 traverse the membrane as a helical segment; the sequence is LTVVIVSVVLTFLPINFLHPV. At 181–187 the chain is on the cytoplasmic side; the sequence is RVKRLRP. The chain crosses the membrane as a helical span at residues 188–208; the sequence is LNLGVFFLWSALGIFSLLMHF. Residues 209-214 are Periplasmic-facing; that stretch reads DTPEWA. The chain crosses the membrane as a helical span at residues 215 to 235; sequence LILFIVTGAYLYVIGAVLQFF. Residues 236–242 lie on the Cytoplasmic side of the membrane; that stretch reads PALGRET.

This sequence belongs to the CDP-alcohol phosphatidyltransferase class-I family. Requires Mn(2+) as cofactor.

The protein resides in the cell inner membrane. It carries out the reaction a CDP-1,2-diacyl-sn-glycerol + choline = a 1,2-diacyl-sn-glycero-3-phosphocholine + CMP + H(+). Functionally, condenses choline with CDP-diglyceride to produce phosphatidylcholine and CMP. In Rhizobium johnstonii (strain DSM 114642 / LMG 32736 / 3841) (Rhizobium leguminosarum bv. viciae), this protein is Phosphatidylcholine synthase.